The primary structure comprises 147 residues: uncharacterized protein (147 aa).

This is an uncharacterized protein from Escherichia coli (strain K12).